Reading from the N-terminus, the 583-residue chain is Secretogranin-2b (583 aa).

Residues 1-28 form the signal peptide; sequence MMLSLPKLSAGGVVVLLATLLHTLTVQG. Disordered regions lie at residues 123–159 and 526–583; these read AGES…AGFV and VDNG…VAGM. Basic and acidic residues predominate over residues 534–546; it reads AKRDTQGKEEPEG.

Belongs to the chromogranin/secretogranin protein family.

It is found in the secreted. In terms of biological role, neuroendocrine protein of the granin family that regulates the biogenesis of secretory granules. Required for neurovascular modeling of the hindbrain. Acts in a non-cell autonomous manner and is required for migration and proliferation of central artery endothelial cells. Required for normal courting behavior and spawning. The chain is Secretogranin-2b from Danio rerio (Zebrafish).